A 393-amino-acid chain; its full sequence is Riboflavin biosynthesis protein RibBA (393 aa).

The DHBP synthase stretch occupies residues 1-200 (MEFDEIKDAL…IESLVNYQKD (200 aa)). Residues 27–28 (RE), Asp-32, 139–143 (RTGHT), and Glu-163 each bind D-ribulose 5-phosphate. Glu-28 contributes to the Mg(2+) binding site. His-142 contributes to the Mg(2+) binding site. Positions 201-393 (KDTSVELKAK…TKKIKMGHLI (193 aa)) are GTP cyclohydrolase II. A GTP-binding site is contributed by 249–253 (RIHSA). Zn(2+)-binding residues include Cys-254, Cys-265, and Cys-267. GTP contacts are provided by residues Gln-270, 291–293 (EGR), and Thr-313. The active-site Proton acceptor; for GTP cyclohydrolase activity is Asp-325. Arg-327 functions as the Nucleophile; for GTP cyclohydrolase activity in the catalytic mechanism. Positions 348 and 353 each coordinate GTP.

This sequence in the N-terminal section; belongs to the DHBP synthase family. In the C-terminal section; belongs to the GTP cyclohydrolase II family. Requires Mg(2+) as cofactor. The cofactor is Mn(2+). Zn(2+) serves as cofactor.

It catalyses the reaction D-ribulose 5-phosphate = (2S)-2-hydroxy-3-oxobutyl phosphate + formate + H(+). The catalysed reaction is GTP + 4 H2O = 2,5-diamino-6-hydroxy-4-(5-phosphoribosylamino)-pyrimidine + formate + 2 phosphate + 3 H(+). The protein operates within cofactor biosynthesis; riboflavin biosynthesis; 2-hydroxy-3-oxobutyl phosphate from D-ribulose 5-phosphate: step 1/1. Its pathway is cofactor biosynthesis; riboflavin biosynthesis; 5-amino-6-(D-ribitylamino)uracil from GTP: step 1/4. Its function is as follows. Catalyzes the conversion of D-ribulose 5-phosphate to formate and 3,4-dihydroxy-2-butanone 4-phosphate. In terms of biological role, catalyzes the conversion of GTP to 2,5-diamino-6-ribosylamino-4(3H)-pyrimidinone 5'-phosphate (DARP), formate and pyrophosphate. This chain is Riboflavin biosynthesis protein RibBA, found in Staphylococcus haemolyticus (strain JCSC1435).